The sequence spans 263 residues: MLIDPLTVVAQIINFLILVALLRRFLYTPITQVMKKRERLIAQQLQDAAHQQEVAQQEAERWRQMQQSLEHRQASFLTQAQDAADEHRHQLLQQIRDEVDSTQAQWREAVKREQHVFLSALQQRAGQQLAATLRCILQDLASANLEQQILETFITRLSHLPFSEQGVLETSLSNARGEELVISSTFPMPEDRKAQILAVLHQYAPAMESSVYQFVTIPDLICGIELKIPGYKLAWTIEQYLEQLEVKLNQVWDGMEKSWVEQG.

A helical transmembrane segment spans residues 2–22 (LIDPLTVVAQIINFLILVALL).

Belongs to the ATPase B chain family. In terms of assembly, F-type ATPases have 2 components, F(1) - the catalytic core - and F(0) - the membrane proton channel. F(1) has five subunits: alpha(3), beta(3), gamma(1), delta(1), epsilon(1). F(0) has four main subunits: a(1), b(1), b'(1) and c(10-14). The alpha and beta chains form an alternating ring which encloses part of the gamma chain. F(1) is attached to F(0) by a central stalk formed by the gamma and epsilon chains, while a peripheral stalk is formed by the delta, b and b' chains.

It is found in the cellular thylakoid membrane. Functionally, f(1)F(0) ATP synthase produces ATP from ADP in the presence of a proton or sodium gradient. F-type ATPases consist of two structural domains, F(1) containing the extramembraneous catalytic core and F(0) containing the membrane proton channel, linked together by a central stalk and a peripheral stalk. During catalysis, ATP synthesis in the catalytic domain of F(1) is coupled via a rotary mechanism of the central stalk subunits to proton translocation. In terms of biological role, component of the F(0) channel, it forms part of the peripheral stalk, linking F(1) to F(0). This is ATP synthase subunit b 2 from Acaryochloris marina (strain MBIC 11017).